A 428-amino-acid polypeptide reads, in one-letter code: Kynureninase (428 aa).

Pyridoxal 5'-phosphate is bound by residues Thr-104, Thr-105, 132–135 (FPSD), Asp-213, His-216, and Tyr-238. Lys-239 is modified (N6-(pyridoxal phosphate)lysine). Residues Trp-267 and Thr-295 each contribute to the pyridoxal 5'-phosphate site.

It belongs to the kynureninase family. As to quaternary structure, homodimer. Pyridoxal 5'-phosphate serves as cofactor.

The enzyme catalyses L-kynurenine + H2O = anthranilate + L-alanine + H(+). It catalyses the reaction 3-hydroxy-L-kynurenine + H2O = 3-hydroxyanthranilate + L-alanine + H(+). It participates in amino-acid degradation; L-kynurenine degradation; L-alanine and anthranilate from L-kynurenine: step 1/1. Its pathway is cofactor biosynthesis; NAD(+) biosynthesis; quinolinate from L-kynurenine: step 2/3. Functionally, catalyzes the cleavage of L-kynurenine (L-Kyn) and L-3-hydroxykynurenine (L-3OHKyn) into anthranilic acid (AA) and 3-hydroxyanthranilic acid (3-OHAA), respectively. The polypeptide is Kynureninase (Bacillus thuringiensis subsp. konkukian (strain 97-27)).